Reading from the N-terminus, the 315-residue chain is Methionyl-tRNA formyltransferase (315 aa).

115–118 (SLLP) contacts (6S)-5,6,7,8-tetrahydrofolate.

The protein belongs to the Fmt family.

The enzyme catalyses L-methionyl-tRNA(fMet) + (6R)-10-formyltetrahydrofolate = N-formyl-L-methionyl-tRNA(fMet) + (6S)-5,6,7,8-tetrahydrofolate + H(+). In terms of biological role, attaches a formyl group to the free amino group of methionyl-tRNA(fMet). The formyl group appears to play a dual role in the initiator identity of N-formylmethionyl-tRNA by promoting its recognition by IF2 and preventing the misappropriation of this tRNA by the elongation apparatus. This chain is Methionyl-tRNA formyltransferase, found in Dehalococcoides mccartyi (strain ATCC BAA-2100 / JCM 16839 / KCTC 5957 / BAV1).